The primary structure comprises 193 residues: Glycerol-3-phosphate acyltransferase (193 aa).

The next 4 helical transmembrane spans lie at 2-22 (LIAL…GLIV), 76-96 (VPIH…FPVF), 112-132 (LLFY…VFLF), and 152-172 (CLFV…AFVI).

It belongs to the PlsY family. In terms of assembly, probably interacts with PlsX.

It is found in the cell membrane. The catalysed reaction is an acyl phosphate + sn-glycerol 3-phosphate = a 1-acyl-sn-glycero-3-phosphate + phosphate. Its pathway is lipid metabolism; phospholipid metabolism. Functionally, catalyzes the transfer of an acyl group from acyl-phosphate (acyl-PO(4)) to glycerol-3-phosphate (G3P) to form lysophosphatidic acid (LPA). This enzyme utilizes acyl-phosphate as fatty acyl donor, but not acyl-CoA or acyl-ACP. This is Glycerol-3-phosphate acyltransferase from Bacillus velezensis (strain DSM 23117 / BGSC 10A6 / LMG 26770 / FZB42) (Bacillus amyloliquefaciens subsp. plantarum).